Here is a 320-residue protein sequence, read N- to C-terminus: Malate dehydrogenase (320 aa).

NAD(+) is bound by residues 10 to 15 (GSGMIG) and Asp-34. Substrate-binding residues include Arg-83 and Arg-89. Residues Asn-96 and 119-121 (ITN) each bind NAD(+). Substrate-binding residues include Asn-121 and Arg-152. Residue His-176 is the Proton acceptor of the active site.

Belongs to the LDH/MDH superfamily. MDH type 3 family.

The catalysed reaction is (S)-malate + NAD(+) = oxaloacetate + NADH + H(+). Its function is as follows. Catalyzes the reversible oxidation of malate to oxaloacetate. This Maricaulis maris (strain MCS10) (Caulobacter maris) protein is Malate dehydrogenase.